Consider the following 398-residue polypeptide: Phosphoglycerate kinase (398 aa).

Residues 24–26 (DFN), R39, 62–65 (HFGR), R121, and R154 each bind substrate. ATP-binding positions include K205, G296, E327, and 354 to 357 (GGDS).

It belongs to the phosphoglycerate kinase family. Monomer.

Its subcellular location is the cytoplasm. It carries out the reaction (2R)-3-phosphoglycerate + ATP = (2R)-3-phospho-glyceroyl phosphate + ADP. It participates in carbohydrate degradation; glycolysis; pyruvate from D-glyceraldehyde 3-phosphate: step 2/5. The protein is Phosphoglycerate kinase of Trichodesmium erythraeum (strain IMS101).